The sequence spans 428 residues: Tyrosine--tRNA ligase (428 aa).

Tyr-36 is a binding site for L-tyrosine. The 'HIGH' region motif lies at 41-50; the sequence is PTAPSLHAGH. Residues Tyr-171 and Gln-175 each coordinate L-tyrosine. The 'KMSKS' region motif lies at 231–235; the sequence is KFGKS. An ATP-binding site is contributed by Lys-234. The S4 RNA-binding domain maps to 359–416; that stretch reads DSIVDLLVETGLAASKGAARRNVAEGGVYVNNIRIESDEWIPQHSDFLHERWLVLRRG.

It belongs to the class-I aminoacyl-tRNA synthetase family. TyrS type 1 subfamily. Homodimer.

The protein localises to the cytoplasm. The enzyme catalyses tRNA(Tyr) + L-tyrosine + ATP = L-tyrosyl-tRNA(Tyr) + AMP + diphosphate + H(+). In terms of biological role, catalyzes the attachment of tyrosine to tRNA(Tyr) in a two-step reaction: tyrosine is first activated by ATP to form Tyr-AMP and then transferred to the acceptor end of tRNA(Tyr). In Mycolicibacterium fortuitum (Mycobacterium fortuitum), this protein is Tyrosine--tRNA ligase.